The sequence spans 402 residues: Protein kinase US3 homolog (402 aa).

Disordered regions lie at residues M1–D21 and F46–T88. The 285-residue stretch at Y102–F386 folds into the Protein kinase domain. ATP-binding positions include L108 to I116 and K129. The active-site Proton acceptor is D218.

It belongs to the protein kinase superfamily. Ser/Thr protein kinase family. Phosphorylated by UL13 homolog; this phosphorylation regulates subsequent phosphorylation of UL31 and UL34 homologs by US3. Autophosphorylated.

Its subcellular location is the host cytoplasm. The protein localises to the host nucleus. It catalyses the reaction L-seryl-[protein] + ATP = O-phospho-L-seryl-[protein] + ADP + H(+). It carries out the reaction L-threonyl-[protein] + ATP = O-phospho-L-threonyl-[protein] + ADP + H(+). Functionally, multifunctional serine/threonine kinase that plays a role in several processes including egress of virus particles from the nucleus, modulation of the actin cytoskeleton and inhibition of apoptosis. Phosphorylates UL31 and UL34 homologs, two critical regulators of capsid budding from nucleus to endoplasmic reticulum, thereby facilitating virion egress. Modulates and redistributes host components of the nuclear envelope, including LMNA, emerin/EMD and the nuclear matrix protein MATR3. Phosphorylates envelope glycoprotein B (gB), probably to direct it to the cell surface. Promotes virus intracellular spread by restructuring host cell cytoskeleton. Blocks host apoptosis to extend cell survival and allow efficient viral replication. Promotes viral gene expression by phosphorylating host HDAC2 to reduce viral genome silencing. The polypeptide is Protein kinase US3 homolog (MDV092) (Gallus gallus (Chicken)).